A 760-amino-acid polypeptide reads, in one-letter code: Xaa-Pro dipeptidyl-peptidase (760 aa).

Catalysis depends on charge relay system residues S349, D469, and H499.

It belongs to the peptidase S15 family. In terms of assembly, homodimer.

It localises to the cytoplasm. It catalyses the reaction Hydrolyzes Xaa-Pro-|- bonds to release unblocked, N-terminal dipeptides from substrates including Ala-Pro-|-p-nitroanilide and (sequentially) Tyr-Pro-|-Phe-Pro-|-Gly-Pro-|-Ile.. Its function is as follows. Removes N-terminal dipeptides sequentially from polypeptides having unsubstituted N-termini provided that the penultimate residue is proline. This Streptococcus pyogenes serotype M12 (strain MGAS9429) protein is Xaa-Pro dipeptidyl-peptidase.